The chain runs to 579 residues: Methionine--tRNA ligase (579 aa).

A 'HIGH' region motif is present at residues 14-24 (PYINGVKHLGN). Zn(2+)-binding residues include C146, C149, C159, and C162. The 'KMSKS' region motif lies at 346–350 (KFSTS). Residue T349 participates in ATP binding.

The protein belongs to the class-I aminoacyl-tRNA synthetase family. MetG type 1 subfamily. Monomer. The cofactor is Zn(2+).

It is found in the cytoplasm. It catalyses the reaction tRNA(Met) + L-methionine + ATP = L-methionyl-tRNA(Met) + AMP + diphosphate. Functionally, is required not only for elongation of protein synthesis but also for the initiation of all mRNA translation through initiator tRNA(fMet) aminoacylation. This chain is Methionine--tRNA ligase, found in Hyphomonas neptunium (strain ATCC 15444).